The chain runs to 124 residues: Late embryogenesis abundant protein 37 (124 aa).

The transit peptide at 1-35 directs the protein to the mitochondrion; the sequence is MSQSLFNLKSLSRSINNTIRMRRYIVITKASQRAY.

The protein belongs to the LEA type 3 family.

Its subcellular location is the mitochondrion. The chain is Late embryogenesis abundant protein 37 from Arabidopsis thaliana (Mouse-ear cress).